Reading from the N-terminus, the 473-residue chain is Serine palmitoyltransferase 1 (473 aa).

Topologically, residues 1–15 (MATATEQWVLVEMVQ) are lumenal. Residues 1–66 (MATATEQWVL…KEELIEEWQP (66 aa)) are interaction with SPTLC2. A helical transmembrane segment spans residues 16-36 (ALYEAPAYHLILEGILILWII). Residues 37–473 (RLLFSKTYKL…IKEVAQAVLL (437 aa)) lie on the Cytoplasmic side of the membrane. Tyr164 carries the post-translational modification Phosphotyrosine; by ABL.

Belongs to the class-II pyridoxal-phosphate-dependent aminotransferase family. In terms of assembly, component of the serine palmitoyltransferase (SPT) complex, which is also composed of SPTLC2 or SPTLC3 and SPTSSA or SPTSSB. The heterodimer with SPTLC2 or SPTLC3 forms the catalytic core of the enzyme, while SPTSSA or SPTSSB subunits determine substrate specificity. SPT also interacts with ORMDL proteins, especially ORMDL3, which negatively regulate SPT activity in the presence of ceramides. Forms dimers of heterodimers with SPTLC2. Interacts with RTN4. Requires pyridoxal 5'-phosphate as cofactor. In terms of processing, phosphorylation at Tyr-164 inhibits activity and promotes cell survival.

Its subcellular location is the endoplasmic reticulum membrane. It catalyses the reaction L-serine + hexadecanoyl-CoA + H(+) = 3-oxosphinganine + CO2 + CoA. The enzyme catalyses octadecanoyl-CoA + L-serine + H(+) = 3-oxoeicosasphinganine + CO2 + CoA. The catalysed reaction is tetradecanoyl-CoA + L-serine + H(+) = 3-oxohexadecasphinganine + CO2 + CoA. It carries out the reaction dodecanoyl-CoA + L-serine + H(+) = 3-oxotetradecasphinganine + CO2 + CoA. It functions in the pathway lipid metabolism; sphingolipid metabolism. Its activity is regulated as follows. SPT complex catalytic activity is negatively regulated by ORMDL proteins, including ORMDL3, in the presence of ceramides. This mechanism allows to maintain ceramide levels at sufficient concentrations for the production of complex sphingolipids, but which prevents the accumulation of ceramides to levels that trigger apoptosis. Functionally, component of the serine palmitoyltransferase multisubunit enzyme (SPT) that catalyzes the initial and rate-limiting step in sphingolipid biosynthesis by condensing L-serine and activated acyl-CoA (most commonly palmitoyl-CoA) to form long-chain bases. The SPT complex is also composed of SPTLC2 or SPTLC3 and SPTSSA or SPTSSB. Within this complex, the heterodimer with SPTLC2 or SPTLC3 forms the catalytic core. The composition of the serine palmitoyltransferase (SPT) complex determines the substrate preference. The SPTLC1-SPTLC2-SPTSSA complex shows a strong preference for C16-CoA substrate, while the SPTLC1-SPTLC3-SPTSSA isozyme uses both C14-CoA and C16-CoA as substrates, with a slight preference for C14-CoA. The SPTLC1-SPTLC2-SPTSSB complex shows a strong preference for C18-CoA substrate, while the SPTLC1-SPTLC3-SPTSSB isozyme displays an ability to use a broader range of acyl-CoAs, without apparent preference. Required for adipocyte cell viability and metabolic homeostasis. The chain is Serine palmitoyltransferase 1 (SPTLC1) from Macaca fascicularis (Crab-eating macaque).